Consider the following 328-residue polypeptide: uncharacterized protein (328 aa).

Residue Ser170 is modified to Phosphoserine.

It localises to the cytoplasm. Its subcellular location is the nucleus. This is an uncharacterized protein from Schizosaccharomyces pombe (strain 972 / ATCC 24843) (Fission yeast).